Consider the following 187-residue polypeptide: MSFISRLNTSLEEEAFHKQVADSQWVCSVDTGSGIINSDPTLDFKICPKTGGAISVLSVSWQNNSPQLVPGHYLLRSGTWPITGVKLSGLLVHRSIRLETTRKLLEAQRISVSQQASSSSAAGAAGKQPQVTLTQLQEELDEAKTRLALKEKELLEALSEISKLRLQLSNQLSNDDVFSGWTEEGPK.

Positions K127–L172 form a coiled coil.

This is an uncharacterized protein from Tomato torrado virus (isolate Solanum lycopersicum/Spain/PRIToTV0301/-) (ToTV).